Consider the following 716-residue polypeptide: Fatty acid oxidation complex subunit alpha (716 aa).

Residues Met-1–Ala-189 form an enoyl-CoA hydratase/isomerase region. Asp-296 contacts substrate. Positions Lys-311 to Ala-716 are 3-hydroxyacyl-CoA dehydrogenase. NAD(+) contacts are provided by residues Met-324, Asp-343, Val-400–Glu-402, Lys-407, and Ser-429. The active-site For 3-hydroxyacyl-CoA dehydrogenase activity is His-450. Asn-453 contacts NAD(+). Residues Asn-500 and Tyr-660 each coordinate substrate.

The protein in the N-terminal section; belongs to the enoyl-CoA hydratase/isomerase family. This sequence in the C-terminal section; belongs to the 3-hydroxyacyl-CoA dehydrogenase family. In terms of assembly, heterotetramer of two alpha chains (FadB) and two beta chains (FadA).

The catalysed reaction is a (3S)-3-hydroxyacyl-CoA + NAD(+) = a 3-oxoacyl-CoA + NADH + H(+). It catalyses the reaction a (3S)-3-hydroxyacyl-CoA = a (2E)-enoyl-CoA + H2O. The enzyme catalyses a 4-saturated-(3S)-3-hydroxyacyl-CoA = a (3E)-enoyl-CoA + H2O. It carries out the reaction (3S)-3-hydroxybutanoyl-CoA = (3R)-3-hydroxybutanoyl-CoA. The catalysed reaction is a (3Z)-enoyl-CoA = a 4-saturated (2E)-enoyl-CoA. It catalyses the reaction a (3E)-enoyl-CoA = a 4-saturated (2E)-enoyl-CoA. The protein operates within lipid metabolism; fatty acid beta-oxidation. Functionally, involved in the aerobic and anaerobic degradation of long-chain fatty acids via beta-oxidation cycle. Catalyzes the formation of 3-oxoacyl-CoA from enoyl-CoA via L-3-hydroxyacyl-CoA. It can also use D-3-hydroxyacyl-CoA and cis-3-enoyl-CoA as substrate. The protein is Fatty acid oxidation complex subunit alpha of Shewanella sp. (strain MR-7).